The following is a 272-amino-acid chain: Cytochrome c oxidase subunit 3 (272 aa).

7 consecutive transmembrane segments (helical) span residues 20–40 (PWPL…VLFM), 45–65 (GGGE…FTWW), 89–109 (GMIL…WAFF), 128–148 (VVAI…LSSG), 166–186 (AMQG…MQGF), 204–224 (FYMA…FLFI), and 248–268 (YWHF…WWGF).

It belongs to the cytochrome c oxidase subunit 3 family. As to quaternary structure, component of the cytochrome c oxidase (complex IV, CIV), a multisubunit enzyme composed of a catalytic core of 3 subunits and several supernumerary subunits. The complex exists as a monomer or a dimer and forms supercomplexes (SCs) in the inner mitochondrial membrane with ubiquinol-cytochrome c oxidoreductase (cytochrome b-c1 complex, complex III, CIII).

It localises to the mitochondrion inner membrane. The catalysed reaction is 4 Fe(II)-[cytochrome c] + O2 + 8 H(+)(in) = 4 Fe(III)-[cytochrome c] + 2 H2O + 4 H(+)(out). Its function is as follows. Component of the cytochrome c oxidase, the last enzyme in the mitochondrial electron transport chain which drives oxidative phosphorylation. The respiratory chain contains 3 multisubunit complexes succinate dehydrogenase (complex II, CII), ubiquinol-cytochrome c oxidoreductase (cytochrome b-c1 complex, complex III, CIII) and cytochrome c oxidase (complex IV, CIV), that cooperate to transfer electrons derived from NADH and succinate to molecular oxygen, creating an electrochemical gradient over the inner membrane that drives transmembrane transport and the ATP synthase. Cytochrome c oxidase is the component of the respiratory chain that catalyzes the reduction of oxygen to water. Electrons originating from reduced cytochrome c in the intermembrane space (IMS) are transferred via the dinuclear copper A center (CU(A)) of subunit 2 and heme A of subunit 1 to the active site in subunit 1, a binuclear center (BNC) formed by heme A3 and copper B (CU(B)). The BNC reduces molecular oxygen to 2 water molecules using 4 electrons from cytochrome c in the IMS and 4 protons from the mitochondrial matrix. This Pylaiella littoralis (Seaweed) protein is Cytochrome c oxidase subunit 3 (COX3).